The primary structure comprises 82 residues: Turripeptide Gsp9.2 (82 aa).

A signal peptide spans 1 to 23; that stretch reads MMAKLMITVMMVLLLSLQQGADG. A propeptide spanning residues 24-46 is cleaved from the precursor; that stretch reads RSERWRKNQMAASSIMRNLITAR. 2 positions are modified to 4-hydroxyproline: proline 49 and proline 50. Intrachain disulfides connect cysteine 53-cysteine 68, cysteine 58-cysteine 72, and cysteine 64-cysteine 79. Glutamate 56 is subject to 4-carboxyglutamate.

This sequence belongs to the Pg turripeptide superfamily. As to expression, expressed by the venom duct.

The protein resides in the secreted. The protein is Turripeptide Gsp9.2 of Gemmula speciosa (Splendid gem-turris).